Consider the following 287-residue polypeptide: Gene 31 protein (287 aa).

Residues 13 to 58 (AGRPAGLPGRGGQPGLAGAEGGEGRAGPGAHGDGVRQGGGLQTGGA) are disordered. The span at 20 to 58 (PGRGGQPGLAGAEGGEGRAGPGAHGDGVRQGGGLQTGGA) shows a compositional bias: gly residues.

The protein belongs to the herpesviridae UL92 family.

The sequence is that of Gene 31 protein (31) from Equine herpesvirus 2 (strain 86/87) (EHV-2).